The sequence spans 146 residues: Hemoglobin subunit beta (146 aa).

Residue Thr-1 is modified to Blocked amino end (Thr). The Globin domain occupies His-2–His-146. Residues His-63 and His-92 each contribute to the heme b site.

It belongs to the globin family. In terms of assembly, heterotetramer of two alpha chains and two beta chains. As to expression, red blood cells.

In terms of biological role, involved in oxygen transport from the lung to the various peripheral tissues. The polypeptide is Hemoglobin subunit beta (HBB) (Caretta caretta (Loggerhead sea turtle)).